Consider the following 60-residue polypeptide: SVTIDYDKCKGPECAECVNACPMEVFEIQGDKVVVAKEDDCTFCMVCVDVCPTDAITVKE.

4Fe-4S ferredoxin-type domains follow at residues 2–30 (VTID…EIQG) and 31–60 (DKVV…TVKE). 8 residues coordinate [4Fe-4S] cluster: Cys9, Cys14, Cys17, Cys21, Cys41, Cys44, Cys47, and Cys51.

It depends on [4Fe-4S] cluster as a cofactor.

Its function is as follows. Ferredoxins are iron-sulfur proteins that transfer electrons probably in the CO-dehydrogenase complex. This Methanothermococcus thermolithotrophicus (Methanococcus thermolithotrophicus) protein is Ferredoxin.